Here is a 320-residue protein sequence, read N- to C-terminus: Olfactory receptor 52W1 (320 aa).

The Extracellular portion of the chain corresponds to 1 to 30 (MAETLQLNSTFLHPNFFILTGFPGLGSAQT). N-linked (GlcNAc...) asparagine glycosylation is present at Asn8. The chain crosses the membrane as a helical span at residues 31-51 (WLTLVFGPIYLLALLGNGALP). The Cytoplasmic segment spans residues 52–59 (AVVWIDST). Residues 60–80 (LHQPMFLLLAILAATDLGLAT) form a helical membrane-spanning segment. Residues 81–104 (SIAPGLLAVLWLGPRSVPYAVCLV) are Extracellular-facing. The chain crosses the membrane as a helical span at residues 105–125 (QMFFVHALTAMESGVLLAMAC). Over 126–144 (DRAAAIGRPLHYPVLVTKA) the chain is Cytoplasmic. The chain crosses the membrane as a helical span at residues 145–165 (CVGYAALALALKAVAIVVPFP). Over 166 to 201 (LLVAKFEHFQAKTIGHTYCAHMAVVELVVGNTQATN) the chain is Extracellular. Residues 202–222 (LYGLALSLAISGMDILGITGS) form a helical membrane-spanning segment. Over 223–242 (YGLIAHAVLQLPTREAHAKA) the chain is Cytoplasmic. Residues 243–263 (FGTCSSHICVILAFYIPGLFS) form a helical membrane-spanning segment. Residues 264–279 (YLTHRFGHHTVPKPVH) are Extracellular-facing. A helical membrane pass occupies residues 280–300 (ILLSNIYLLLPPALNPLIYGA). At 301-320 (RTKQIRDRLLETFTFRKSPL) the chain is on the cytoplasmic side.

Belongs to the G-protein coupled receptor 1 family.

The protein resides in the cell membrane. Functionally, odorant receptor. The chain is Olfactory receptor 52W1 (OR52W1) from Homo sapiens (Human).